Reading from the N-terminus, the 706-residue chain is Ribosomal RNA large subunit methyltransferase K/L (706 aa).

The THUMP domain occupies 43–154; that stretch reads LMYQSLLWSR…RDMASVALDL (112 aa).

Belongs to the methyltransferase superfamily. RlmKL family.

Its subcellular location is the cytoplasm. The catalysed reaction is guanosine(2445) in 23S rRNA + S-adenosyl-L-methionine = N(2)-methylguanosine(2445) in 23S rRNA + S-adenosyl-L-homocysteine + H(+). It carries out the reaction guanosine(2069) in 23S rRNA + S-adenosyl-L-methionine = N(2)-methylguanosine(2069) in 23S rRNA + S-adenosyl-L-homocysteine + H(+). Functionally, specifically methylates the guanine in position 2445 (m2G2445) and the guanine in position 2069 (m7G2069) of 23S rRNA. This chain is Ribosomal RNA large subunit methyltransferase K/L, found in Yersinia pestis (strain Pestoides F).